Reading from the N-terminus, the 385-residue chain is Polyketide synthase 2 (385 aa).

Cysteine 157 is an active-site residue.

Belongs to the thiolase-like superfamily. Chalcone/stilbene synthases family. Expressed in leaves and glandular trichomes.

The protein resides in the cytoplasm. Functionally, polyketide synthase responsible for the biosynthesis of secondary metabolites. The chain is Polyketide synthase 2 (PKSG2) from Cannabis sativa (Hemp).